A 399-amino-acid chain; its full sequence is Elongation factor Tu (399 aa).

One can recognise a tr-type G domain in the interval 10-209 (KPHVNIGTIG…AVDSYIPTPK (200 aa)). Residues 19-26 (GHVDHGKT) are G1. 19–26 (GHVDHGKT) is a GTP binding site. Residue Thr-26 participates in Mg(2+) binding. The tract at residues 60–64 (GITIA) is G2. The segment at 81–84 (DCPG) is G3. Residues 81–85 (DCPGH) and 136–139 (NKTD) each bind GTP. Positions 136-139 (NKTD) are G4. The segment at 174-176 (SAL) is G5.

Belongs to the TRAFAC class translation factor GTPase superfamily. Classic translation factor GTPase family. EF-Tu/EF-1A subfamily. In terms of assembly, monomer.

It localises to the cytoplasm. It catalyses the reaction GTP + H2O = GDP + phosphate + H(+). In terms of biological role, GTP hydrolase that promotes the GTP-dependent binding of aminoacyl-tRNA to the A-site of ribosomes during protein biosynthesis. The sequence is that of Elongation factor Tu from Campylobacter hominis (strain ATCC BAA-381 / DSM 21671 / CCUG 45161 / LMG 19568 / NCTC 13146 / CH001A).